An 857-amino-acid chain; its full sequence is Leucine-rich repeat extensin-like protein 5 (857 aa).

Positions Met-1–Ser-31 are cleaved as a signal peptide. One copy of the LRR 1 repeat lies at Leu-32–Tyr-53. N-linked (GlcNAc...) asparagine glycosylation occurs at Asn-98. LRR repeat units follow at residues Ile-125–Leu-149, Thr-150–Arg-172, Lys-174–Leu-197, Pro-198–Lys-221, Leu-223–Ser-244, Val-246–Met-267, Arg-268–Leu-291, Lys-292–Met-315, Val-316–Leu-339, and Arg-341–Leu-362. A glycan (N-linked (GlcNAc...) asparagine) is linked at Asn-293. Asn-344 carries N-linked (GlcNAc...) asparagine glycosylation. Disordered stretches follow at residues Pro-406–Pro-776 and Tyr-817–Pro-839. Composition is skewed to pro residues over residues Val-408–Ile-571 and Pro-579–His-768. The segment at Ser-615–Tyr-857 is contains the Ser-Pro(4) repeats.

In terms of processing, hydroxylated on proline residues in the S-P-P-P-P repeat. O-glycosylated on hydroxyprolines. In terms of tissue distribution, expressed in roots, leaves and flowers.

It localises to the secreted. The protein resides in the cell wall. In terms of biological role, modulates cell morphogenesis by regulating cell wall formation and assembly, and/or growth polarization. The protein is Leucine-rich repeat extensin-like protein 5 (LRX5) of Arabidopsis thaliana (Mouse-ear cress).